The following is a 73-amino-acid chain: Omega-conotoxin CVID (73 aa).

Positions 1–22 (MKLTCVVIVAVLLLTACQLITA) are cleaved as a signal peptide. Positions 23 to 45 (DDSRGTQKHRALRSDTKLSMSTR) are excised as a propeptide. 3 disulfides stabilise this stretch: cysteine 46-cysteine 61, cysteine 53-cysteine 65, and cysteine 60-cysteine 72. Cysteine 72 is modified (cysteine amide).

It belongs to the conotoxin O1 superfamily. Expressed by the venom duct.

It localises to the secreted. Functionally, omega-conotoxins act at presynaptic membranes, they bind and block voltage-gated calcium channels. This toxin inhibits neurotransmitter release, it blocks N-type calcium channels, probably a N-type (Cav2.2/CACNA1B) calcium channel variant. The sequence is that of Omega-conotoxin CVID from Conus catus (Cat cone).